The primary structure comprises 451 residues: Glutamyl-tRNA(Gln) amidotransferase subunit D (451 aa).

A disordered region spans residues 78-97 (PREAPTPGEEEGSQEDFGQP). The 334-residue stretch at 99–432 (PRVFFVGTGG…EEIQRLFTAN (334 aa)) folds into the Asparaginase/glutaminase domain. Active-site residues include Thr-109, Thr-187, Asp-188, and Lys-266.

This sequence belongs to the asparaginase 1 family. GatD subfamily. As to quaternary structure, heterodimer of GatD and GatE.

The enzyme catalyses L-glutamyl-tRNA(Gln) + L-glutamine + ATP + H2O = L-glutaminyl-tRNA(Gln) + L-glutamate + ADP + phosphate + H(+). Its function is as follows. Allows the formation of correctly charged Gln-tRNA(Gln) through the transamidation of misacylated Glu-tRNA(Gln) in organisms which lack glutaminyl-tRNA synthetase. The reaction takes place in the presence of glutamine and ATP through an activated gamma-phospho-Glu-tRNA(Gln). The GatDE system is specific for glutamate and does not act on aspartate. This Thermofilum pendens (strain DSM 2475 / Hrk 5) protein is Glutamyl-tRNA(Gln) amidotransferase subunit D.